We begin with the raw amino-acid sequence, 329 residues long: Beta-tectorin (329 aa).

The N-terminal stretch at M1–A17 is a signal peptide. One can recognise a ZP domain in the interval S19–R283. N-linked (GlcNAc...) asparagine glycosylation is found at N80, N104, N116, and N145. An intrachain disulfide couples C204 to C264. Residue A305 is the site of GPI-anchor amidated alanine attachment. The propeptide at F306–L329 is removed in mature form.

May form homomeric filament after self-association or heteromeric filament after association with alpha-tectorin. Interacts with CEACAM16. The presence of a hydrophobic C-terminus preceded by a potential cleavage site strongly suggests that tectorins are synthesized as glycosylphosphatidylinositol-linked, membrane-bound precursors. Tectorins are targeted to the apical surface of the inner ear epithelia by the lipid and proteolytically released into the extracellular compartment.

The protein resides in the cell membrane. Its subcellular location is the secreted. It localises to the extracellular space. The protein localises to the extracellular matrix. Its function is as follows. One of the major non-collagenous components of the tectorial membrane. The tectorial membrane is an extracellular matrix of the inner ear that covers the neuroepithelium of the cochlea and contacts the stereocilia bundles of specialized sensory hair cells. Sound induces movement of these hair cells relative to the tectorial membrane, deflects the stereocilia and leads to fluctuations in hair-cell membrane potential, transducing sound into electrical signals. In Mus musculus (Mouse), this protein is Beta-tectorin (Tectb).